Reading from the N-terminus, the 808-residue chain is Transducin beta-like protein 3 (808 aa).

Residue Ala-2 is modified to N-acetylalanine. 13 WD repeats span residues 64 to 105 (EDQE…RLWK), 107 to 146 (IHTA…GTHH), 149 to 190 (GSPG…CLAV), 193 to 232 (AHYS…ATRT), 245 to 284 (LPEE…CVYT), 290 to 329 (GPGQ…LQKQ), 332 to 372 (GYSE…CQIL), 374 to 413 (GHTD…QVMC), 419 to 459 (GHTH…LSKN), 477 to 516 (CHDK…LLGV), 519 to 560 (GHRR…KTFE), 562 to 602 (HDAS…RTLD), and 604 to 642 (HEDK…EQAE). A Phosphoserine modification is found at Ser-257. Lys-407 participates in a covalent cross-link: Glycyl lysine isopeptide (Lys-Gly) (interchain with G-Cter in SUMO2).

In terms of assembly, part of the small subunit (SSU) processome, composed of more than 70 proteins and the RNA chaperone small nucleolar RNA (snoRNA) U3.

It is found in the nucleus. The protein localises to the nucleolus. Its function is as follows. Part of the small subunit (SSU) processome, first precursor of the small eukaryotic ribosomal subunit. During the assembly of the SSU processome in the nucleolus, many ribosome biogenesis factors, an RNA chaperone and ribosomal proteins associate with the nascent pre-rRNA and work in concert to generate RNA folding, modifications, rearrangements and cleavage as well as targeted degradation of pre-ribosomal RNA by the RNA exosome. This chain is Transducin beta-like protein 3, found in Homo sapiens (Human).